A 596-amino-acid chain; its full sequence is Ran GTPase-activating protein (596 aa).

LRR repeat units lie at residues 44–71 (QTTVHYLNLDGNTLGVEAAKAIGEGLKR), 107–134 (GAKLTVLDLSDNALGPNGMRGLEELLRS), 137–164 (CYSLQELLLCNCGLGPEGGSMLSRALID), 203–230 (LKTFEEIVLEQNSIYIEGVEALAESFKH), 231–258 (NPHLRVLNMNDNTLKSEGAEKIAEALPF), and 259–286 (LPLLREMSFGDCLIKTNGAYHFGEALER). A disordered region spans residues 355 to 418 (HQEEEDLEDE…EYSNVAEETA (64 aa)). Positions 387-410 (TTEEADEDSEGDEDDEEDEGDEEY) are enriched in acidic residues. Thr433 and Thr434 each carry phosphothreonine. The residue at position 436 (Ser436) is a Phosphoserine.

This sequence belongs to the RNA1 family. Forms a complex with Nup358/RanBP2, sbr/Nxf1 and Nxt1. Associates with the nuclear pore complex via its interaction with Nup358/RanBP2. Both full-length and truncated protein are expressed in testis (at protein level). Expressed in oocytes and nurse cells (at protein level).

Its subcellular location is the cytoplasm. The protein resides in the nucleus membrane. Functionally, GTPase activator for the nuclear Ras-related regulatory protein Ran, converting it to the putatively inactive GDP-bound state. Trans-acting factor necessary for meiotic distortion. Distortion is only seen in individuals that carry the RanGAP tandem duplication and express a RanGAP truncated protein. Binding of truncated RanGAP product to the Responder(RSP) locus initiates events that lead to sperm dysfunction. During oogenesis, plays a role in the biogenesis of annulate lamellae containing nuclear pore complex components. This is Ran GTPase-activating protein (RanGAP) from Drosophila melanogaster (Fruit fly).